A 428-amino-acid chain; its full sequence is MLDPKFLRNDIEQTALRLASRGYTLDVELLNQLEEKRKILQITTETLQAERNSRSKEVGQAAKRGEDITPLRTEMGLLGERLDSAKEDFALLAEQIKSLAYSMPNLPHESAPLGKDESENVEILKWGEPKKFDFEVKDHVDLGEALDGLDFKSAVKISGSRFIVMRGKIAKLHRALAQYMLDLHTDHHGYTEMYVPYLVNADSLYGTGQLPKFGDDLFNTKPATEEGIGMSLIPTAEVPLTNMSRDMIYDESDLPLKLTAHTPCFRSEAGSYGRDTRGLIRQHQFDKVEMVQFVHPEKSFEALEELTGHAEQVLKNLQLPYRKVVLCTGDMGFGATKTYDLEVWLPAQDQYREISSCSNIGDFQARRLQARFRPTGAKKPELLHTLNGSGLAVGRTLVAVLENYQLEDGSIEIPQVLQQYMGGLTHIG.

235–237 (TAE) contacts L-serine. 266–268 (RSE) contributes to the ATP binding site. Glu289 is an L-serine binding site. An ATP-binding site is contributed by 353-356 (EISS). Position 389 (Ser389) interacts with L-serine.

The protein belongs to the class-II aminoacyl-tRNA synthetase family. Type-1 seryl-tRNA synthetase subfamily. Homodimer. The tRNA molecule binds across the dimer.

The protein resides in the cytoplasm. The enzyme catalyses tRNA(Ser) + L-serine + ATP = L-seryl-tRNA(Ser) + AMP + diphosphate + H(+). It carries out the reaction tRNA(Sec) + L-serine + ATP = L-seryl-tRNA(Sec) + AMP + diphosphate + H(+). It participates in aminoacyl-tRNA biosynthesis; selenocysteinyl-tRNA(Sec) biosynthesis; L-seryl-tRNA(Sec) from L-serine and tRNA(Sec): step 1/1. Catalyzes the attachment of serine to tRNA(Ser). Is also able to aminoacylate tRNA(Sec) with serine, to form the misacylated tRNA L-seryl-tRNA(Sec), which will be further converted into selenocysteinyl-tRNA(Sec). In Psychromonas ingrahamii (strain DSM 17664 / CCUG 51855 / 37), this protein is Serine--tRNA ligase.